Reading from the N-terminus, the 56-residue chain is Large ribosomal subunit protein bL32 (56 aa).

The tract at residues 1 to 34 (MAVQQNKKSRSKRGMRRSHDSLSTAQLSVDATSG) is disordered. Basic residues predominate over residues 7-16 (KKSRSKRGMR). Residues 21 to 31 (SLSTAQLSVDA) are compositionally biased toward polar residues.

It belongs to the bacterial ribosomal protein bL32 family.

The chain is Large ribosomal subunit protein bL32 from Shewanella frigidimarina (strain NCIMB 400).